The primary structure comprises 180 residues: Peptidyl-tRNA hydrolase (180 aa).

TRNA is bound at residue tyrosine 15. Catalysis depends on histidine 20, which acts as the Proton acceptor. TRNA-binding residues include phenylalanine 67, asparagine 69, and asparagine 115.

It belongs to the PTH family. As to quaternary structure, monomer.

It is found in the cytoplasm. It catalyses the reaction an N-acyl-L-alpha-aminoacyl-tRNA + H2O = an N-acyl-L-amino acid + a tRNA + H(+). Hydrolyzes ribosome-free peptidyl-tRNAs (with 1 or more amino acids incorporated), which drop off the ribosome during protein synthesis, or as a result of ribosome stalling. Functionally, catalyzes the release of premature peptidyl moieties from peptidyl-tRNA molecules trapped in stalled 50S ribosomal subunits, and thus maintains levels of free tRNAs and 50S ribosomes. The chain is Peptidyl-tRNA hydrolase from Chlamydia pneumoniae (Chlamydophila pneumoniae).